Here is a 1157-residue protein sequence, read N- to C-terminus: ATP-dependent helicase/deoxyribonuclease subunit B (1157 aa).

Residues 1–277 form the UvrD-like helicase ATP-binding domain; the sequence is MTLQIIAGKA…KILLENKRAN (277 aa). 8 to 15 provides a ligand contact to ATP; the sequence is GKAGTGKT. Positions 271-590 constitute a UvrD-like helicase C-terminal domain; it reads LENKRANSDS…VLADMENAKL (320 aa). [4Fe-4S] cluster contacts are provided by Cys-794, Cys-1115, Cys-1118, and Cys-1124.

It belongs to the helicase family. AddB/RexB type 1 subfamily. Heterodimer of AddA and AddB. The cofactor is Mg(2+). It depends on [4Fe-4S] cluster as a cofactor.

Functionally, the heterodimer acts as both an ATP-dependent DNA helicase and an ATP-dependent, dual-direction single-stranded exonuclease. Recognizes the chi site generating a DNA molecule suitable for the initiation of homologous recombination. The AddB subunit has 5' -&gt; 3' nuclease activity but not helicase activity. The protein is ATP-dependent helicase/deoxyribonuclease subunit B of Listeria innocua serovar 6a (strain ATCC BAA-680 / CLIP 11262).